We begin with the raw amino-acid sequence, 94 residues long: MIKSELVQTIANRNPHLFLRDVENIVNAIFDEITEALAQGNRVELRGFGAFSVKNRPARTGRNPRTGESVHVEEKWVPFFKTGKELRERLNADE.

It belongs to the bacterial histone-like protein family. As to quaternary structure, heterodimer of an alpha and a beta chain.

This protein is one of the two subunits of integration host factor, a specific DNA-binding protein that functions in genetic recombination as well as in transcriptional and translational control. The protein is Integration host factor subunit beta of Chelativorans sp. (strain BNC1).